The primary structure comprises 314 residues: Cytochrome f (314 aa).

The signal sequence occupies residues 1–29; the sequence is MTRSISISVLIISVLIMIYVITRTSISNA. Heme contacts are provided by Tyr30, Cys50, Cys53, and His54. The chain crosses the membrane as a helical span at residues 280–300; sequence VQGLLFFLASVILAQIFLVLK.

The protein belongs to the cytochrome f family. In terms of assembly, the 4 large subunits of the cytochrome b6-f complex are cytochrome b6, subunit IV (17 kDa polypeptide, petD), cytochrome f and the Rieske protein, while the 4 small subunits are PetG, PetL, PetM and PetN. The complex functions as a dimer. The cofactor is heme.

It localises to the plastid. The protein resides in the chloroplast thylakoid membrane. Functionally, component of the cytochrome b6-f complex, which mediates electron transfer between photosystem II (PSII) and photosystem I (PSI), cyclic electron flow around PSI, and state transitions. In Illicium oligandrum (Star anise), this protein is Cytochrome f.